Reading from the N-terminus, the 194-residue chain is Methylthioribulose-1-phosphate dehydratase (194 aa).

H84 and H86 together coordinate Zn(2+).

This sequence belongs to the aldolase class II family. MtnB subfamily. The cofactor is Zn(2+).

The catalysed reaction is 5-(methylsulfanyl)-D-ribulose 1-phosphate = 5-methylsulfanyl-2,3-dioxopentyl phosphate + H2O. The protein operates within amino-acid biosynthesis; L-methionine biosynthesis via salvage pathway; L-methionine from S-methyl-5-thio-alpha-D-ribose 1-phosphate: step 2/6. Its function is as follows. Catalyzes the dehydration of methylthioribulose-1-phosphate (MTRu-1-P) into 2,3-diketo-5-methylthiopentyl-1-phosphate (DK-MTP-1-P). This is Methylthioribulose-1-phosphate dehydratase from Cronobacter sakazakii (Enterobacter sakazakii).